The primary structure comprises 220 residues: Tumor protein D54 (220 aa).

Met-1 is modified (N-acetylmethionine). Residues 1–14 are compositionally biased toward polar residues; the sequence is MDSASQDINLNSPN. Residues 1–26 form a disordered region; sequence MDSASQDINLNSPNKGVLSDFMTDVP. Phosphoserine occurs at positions 3, 12, and 19. Residues 40–82 adopt a coiled-coil conformation; it reads GLTEVEEEELRAELAKVEEEIVTLRQVLAAKERHCGELKRRLG. Phosphoserine is present on residues Ser-96, Ser-149, Ser-168, and Ser-175. At Thr-177 the chain carries Phosphothreonine. A Phosphoserine modification is found at Ser-180. Thr-187 is modified (phosphothreonine). The disordered stretch occupies residues 189 to 220; sequence KSKVVGGRENGSDTLPSSPGSGDQTLPDHAPF. Polar residues predominate over residues 200–212; sequence SDTLPSSPGSGDQ. Ser-206 and Ser-209 each carry phosphoserine.

The protein belongs to the TPD52 family. In terms of assembly, forms a homodimer or heterodimer with other members of the family. Interacts with MAL2.

The polypeptide is Tumor protein D54 (Tpd52l2) (Rattus norvegicus (Rat)).